A 51-amino-acid polypeptide reads, in one-letter code: Small integral membrane protein 38 (51 aa).

The helical transmembrane segment at 13 to 33 (PLLALLVVILLARLILWSCLG) threads the bilayer.

Its subcellular location is the membrane. This Homo sapiens (Human) protein is Small integral membrane protein 38.